Reading from the N-terminus, the 263-residue chain is 3-methyl-2-oxobutanoate hydroxymethyltransferase (263 aa).

Residues D45 and D84 each contribute to the Mg(2+) site. Residues 45-46, D84, and K112 contribute to the 3-methyl-2-oxobutanoate site; that span reads DS. E114 is a binding site for Mg(2+). The Proton acceptor role is filled by E181.

This sequence belongs to the PanB family. In terms of assembly, homodecamer; pentamer of dimers. Mg(2+) is required as a cofactor.

Its subcellular location is the cytoplasm. It catalyses the reaction 3-methyl-2-oxobutanoate + (6R)-5,10-methylene-5,6,7,8-tetrahydrofolate + H2O = 2-dehydropantoate + (6S)-5,6,7,8-tetrahydrofolate. Its pathway is cofactor biosynthesis; (R)-pantothenate biosynthesis; (R)-pantoate from 3-methyl-2-oxobutanoate: step 1/2. In terms of biological role, catalyzes the reversible reaction in which hydroxymethyl group from 5,10-methylenetetrahydrofolate is transferred onto alpha-ketoisovalerate to form ketopantoate. This Buchnera aphidicola subsp. Acyrthosiphon pisum (strain 5A) protein is 3-methyl-2-oxobutanoate hydroxymethyltransferase.